Here is a 126-residue protein sequence, read N- to C-terminus: uncharacterized protein (126 aa).

The Cytoplasmic segment spans residues 1 to 28 (MAGEAVSEHTPDSQEVTVTSVVCCLDSV). The helical transmembrane segment at 29–49 (VEIGHHVVYSVVTPLIVAVLI) threads the bilayer. The Extracellular portion of the chain corresponds to 50–75 (DTMAGEAVLEHTSDSQEEIVTTVVCS). The helical transmembrane segment at 76-96 (VVPLVCFVVSVVCFVISVVEI) threads the bilayer. Position 97 (glycine 97) is a topological domain, cytoplasmic. Residues 98-118 (HHVVYSVVAPLTVTVAVETIA) form a helical membrane-spanning segment. Topologically, residues 119–126 (EEMDSVHT) are extracellular.

The protein resides in the membrane. This is an uncharacterized protein from Saccharomyces cerevisiae (strain ATCC 204508 / S288c) (Baker's yeast).